Consider the following 406-residue polypeptide: Multidrug resistance protein MdtG (406 aa).

The next 11 helical transmembrane spans lie at 16-36 (VAWL…PFLP), 56-76 (LVFS…GGLA), 90-110 (LGMA…QFLL), 113-133 (ALLG…ATQV), 144-164 (TLST…GLLA), 171-191 (PVFF…LFFT), 222-242 (LFVT…ILTL), 254-274 (IAFI…LSAP), 288-308 (ILIT…FVQT), 317-337 (FLLG…LVYN), and 376-396 (AVFC…WNSL).

The protein belongs to the major facilitator superfamily. DHA1 family. MdtG (TC 2.A.1.2.20) subfamily.

It is found in the cell inner membrane. This Citrobacter koseri (strain ATCC BAA-895 / CDC 4225-83 / SGSC4696) protein is Multidrug resistance protein MdtG.